The primary structure comprises 145 residues: Large-conductance mechanosensitive channel (145 aa).

2 helical membrane passes run 14–34 and 83–103; these read VIDL…VNSL and GAFL…FLLV.

Belongs to the MscL family. In terms of assembly, homopentamer.

It is found in the cell inner membrane. Channel that opens in response to stretch forces in the membrane lipid bilayer. May participate in the regulation of osmotic pressure changes within the cell. The polypeptide is Large-conductance mechanosensitive channel (Paracoccus denitrificans (strain Pd 1222)).